The chain runs to 270 residues: Abhydrolase domain-containing protein C22H12.03 (270 aa).

The AB hydrolase-1 domain maps to 21-257 (PPVLIFHGLL…CGHWVHFEKP (237 aa)). Active-site charge relay system residues include serine 95, glutamate 190, and histidine 250.

It belongs to the AB hydrolase superfamily.

The protein resides in the mitochondrion. The sequence is that of Abhydrolase domain-containing protein C22H12.03 from Schizosaccharomyces pombe (strain 972 / ATCC 24843) (Fission yeast).